The following is a 126-amino-acid chain: Ribosome-binding factor A (126 aa).

This sequence belongs to the RbfA family. Monomer. Binds 30S ribosomal subunits, but not 50S ribosomal subunits or 70S ribosomes.

The protein localises to the cytoplasm. Its function is as follows. One of several proteins that assist in the late maturation steps of the functional core of the 30S ribosomal subunit. Associates with free 30S ribosomal subunits (but not with 30S subunits that are part of 70S ribosomes or polysomes). Required for efficient processing of 16S rRNA. May interact with the 5'-terminal helix region of 16S rRNA. This chain is Ribosome-binding factor A, found in Histophilus somni (strain 129Pt) (Haemophilus somnus).